The chain runs to 395 residues: Outer membrane protein assembly factor BamB (395 aa).

The N-terminal stretch at 1–20 is a signal peptide; that stretch reads MKSWCKNLLAAGLSLAMLSA. Residue cysteine 21 is the site of N-palmitoyl cysteine attachment. Cysteine 21 carries the S-diacylglycerol cysteine lipid modification.

The protein belongs to the BamB family. As to quaternary structure, part of the Bam complex.

The protein localises to the cell outer membrane. Functionally, part of the outer membrane protein assembly complex, which is involved in assembly and insertion of beta-barrel proteins into the outer membrane. The sequence is that of Outer membrane protein assembly factor BamB from Shewanella oneidensis (strain ATCC 700550 / JCM 31522 / CIP 106686 / LMG 19005 / NCIMB 14063 / MR-1).